We begin with the raw amino-acid sequence, 339 residues long: Adenylosuccinate synthetase (339 aa).

Residues 12-18 (GDEGKGS) and 42-44 (GHS) contribute to the GTP site. Asp-13 serves as the catalytic Proton acceptor. Asp-13 and Gly-42 together coordinate Mg(2+). Residues 13 to 16 (DEGK), 40 to 43 (NAGH), Thr-127, Arg-141, Gln-179, Thr-194, and Arg-256 contribute to the IMP site. Residue His-43 is the Proton donor of the active site. 252–258 (TVTGRRR) contacts substrate. GTP is bound by residues Arg-258, 284 to 286 (MLD), and 324 to 326 (KTG).

The protein belongs to the adenylosuccinate synthetase family. In terms of assembly, homodimer. It depends on Mg(2+) as a cofactor.

Its subcellular location is the cytoplasm. It carries out the reaction IMP + L-aspartate + GTP = N(6)-(1,2-dicarboxyethyl)-AMP + GDP + phosphate + 2 H(+). It functions in the pathway purine metabolism; AMP biosynthesis via de novo pathway; AMP from IMP: step 1/2. Its function is as follows. Plays an important role in the de novo pathway of purine nucleotide biosynthesis. Catalyzes the first committed step in the biosynthesis of AMP from IMP. This chain is Adenylosuccinate synthetase, found in Thermococcus onnurineus (strain NA1).